Reading from the N-terminus, the 275-residue chain is Large ribosomal subunit protein uL2 (275 aa).

The tract at residues 225-275 is disordered; sequence MNPIDHPHGGGEGRTSGGRHPVTPWGKPTKGKKTRSNKKTDRLIMRRRQTQ.

Belongs to the universal ribosomal protein uL2 family. Part of the 50S ribosomal subunit. Forms a bridge to the 30S subunit in the 70S ribosome.

Functionally, one of the primary rRNA binding proteins. Required for association of the 30S and 50S subunits to form the 70S ribosome, for tRNA binding and peptide bond formation. It has been suggested to have peptidyltransferase activity; this is somewhat controversial. Makes several contacts with the 16S rRNA in the 70S ribosome. This Paramagnetospirillum magneticum (strain ATCC 700264 / AMB-1) (Magnetospirillum magneticum) protein is Large ribosomal subunit protein uL2.